A 197-amino-acid chain; its full sequence is Imidazoleglycerol-phosphate dehydratase (197 aa).

This sequence belongs to the imidazoleglycerol-phosphate dehydratase family.

It is found in the cytoplasm. The enzyme catalyses D-erythro-1-(imidazol-4-yl)glycerol 3-phosphate = 3-(imidazol-4-yl)-2-oxopropyl phosphate + H2O. It participates in amino-acid biosynthesis; L-histidine biosynthesis; L-histidine from 5-phospho-alpha-D-ribose 1-diphosphate: step 6/9. In Cellvibrio japonicus (strain Ueda107) (Pseudomonas fluorescens subsp. cellulosa), this protein is Imidazoleglycerol-phosphate dehydratase.